The chain runs to 634 residues: 1-phosphatidylinositol 4,5-bisphosphate phosphodiesterase zeta-1 (634 aa).

In terms of domain architecture, EF-hand spans 35-70 (CNTIHVKYIFKDNDRLKQGRITIEEFRTIYRIITYR). Residues 155-299 (QDMTHPLTDY…LKFKILVRNK (145 aa)) form the PI-PLC X-box domain. Catalysis depends on residues His-170 and His-215. Residues 312–345 (GSDMHGKVEEFEEEEEIEQEEDGSGAKEPEPVGD) form a disordered region. Over residues 321–334 (EFEEEEEIEQEEDG) the composition is skewed to acidic residues. The 117-residue stretch at 376–492 (LSDLVIYTKV…GYVLKPRFLR (117 aa)) folds into the PI-PLC Y-box domain. One can recognise a C2 domain in the interval 492–615 (RDKKTKFNPH…RGYRRVPLFS (124 aa)).

In terms of assembly, interacts (via its C2 domain) with PtdIns(3)P and, to a lesser extent, PtdIns(5)P in vitro. Ca(2+) is required as a cofactor.

It localises to the nucleus. Its subcellular location is the cytoplasm. It is found in the perinuclear region. It carries out the reaction a 1,2-diacyl-sn-glycero-3-phospho-(1D-myo-inositol-4,5-bisphosphate) + H2O = 1D-myo-inositol 1,4,5-trisphosphate + a 1,2-diacyl-sn-glycerol + H(+). Functionally, the production of the second messenger molecules diacylglycerol (DAG) and inositol 1,4,5-trisphosphate (IP3) is mediated by activated phosphatidylinositol-specific phospholipase C enzymes. In vitro, hydrolyzes PtdIns(4,5)P2 in a Ca(2+)-dependent manner. Triggers intracellular Ca(2+) oscillations in oocytes solely during M phase and is involved in inducing oocyte activation and initiating embryonic development up to the blastocyst stage. Is therefore a strong candidate for the egg-activating soluble sperm factor that is transferred from the sperm into the egg cytoplasm following gamete membrane fusion. May exert an inhibitory effect on phospholipase-C-coupled processes that depend on calcium ions and protein kinase C, including CFTR trafficking and function. This chain is 1-phosphatidylinositol 4,5-bisphosphate phosphodiesterase zeta-1, found in Bos taurus (Bovine).